A 457-amino-acid chain; its full sequence is Argininosuccinate lyase (457 aa).

This sequence belongs to the lyase 1 family. Argininosuccinate lyase subfamily.

Its subcellular location is the cytoplasm. The enzyme catalyses 2-(N(omega)-L-arginino)succinate = fumarate + L-arginine. Its pathway is amino-acid biosynthesis; L-arginine biosynthesis; L-arginine from L-ornithine and carbamoyl phosphate: step 3/3. The polypeptide is Argininosuccinate lyase (Histophilus somni (strain 129Pt) (Haemophilus somnus)).